Reading from the N-terminus, the 331-residue chain is uncharacterized protein (331 aa).

Disordered regions lie at residues 131-163 and 190-209; these read ISHASDQKSRPKPTKPRASRKRAAIAQSKKKRS and DEQKSRQSTSQPDKEIVQSS. Basic residues predominate over residues 140–162; that stretch reads RPKPTKPRASRKRAAIAQSKKKR. A compositionally biased stretch (polar residues) spans 195-209; the sequence is RQSTSQPDKEIVQSS.

This is an uncharacterized protein from Caenorhabditis elegans.